We begin with the raw amino-acid sequence, 108 residues long: uncharacterized protein (108 aa).

Residues 56-108 (ELPSRGCLPAPRPESGQGRLSTGISQNGGRSSAQPCPRCIAGESGHFSHTKNH) are disordered. Residues 73-89 (GRLSTGISQNGGRSSAQ) are compositionally biased toward polar residues.

This is an uncharacterized protein from Homo sapiens (Human).